We begin with the raw amino-acid sequence, 185 residues long: MISVNDFKTGLTISVDNGIWKVIDFQHVKPGKGSAFVRSKLRNLRTGAIQEKTFRAGEKVEQAMIENRRMQYLYADGDNHVFMDNETFDQIELPGDYLKDELNYLKANMEVQVQSYESEVIGVELPKTVELEVTETEPGIKGDTATGATKSATVETGYTLNVPLFVNEGDTLVINTSDGSYISRG.

Belongs to the elongation factor P family.

The protein localises to the cytoplasm. It functions in the pathway protein biosynthesis; polypeptide chain elongation. In terms of biological role, involved in peptide bond synthesis. Stimulates efficient translation and peptide-bond synthesis on native or reconstituted 70S ribosomes in vitro. Probably functions indirectly by altering the affinity of the ribosome for aminoacyl-tRNA, thus increasing their reactivity as acceptors for peptidyl transferase. This chain is Elongation factor P, found in Staphylococcus epidermidis (strain ATCC 35984 / DSM 28319 / BCRC 17069 / CCUG 31568 / BM 3577 / RP62A).